Consider the following 558-residue polypeptide: Putative F-box/LRR-repeat protein R542 (558 aa).

Residues 1 to 47 (MLLNLPYEILLIIFSLIESKKFFKLLSINKEVREFILTMLNQNPKSF) form the F-box domain. LRR repeat units follow at residues 73 to 105 (KSTINDDQLKYLSDVYSLNISNCKSITDRGLSF), 139 to 176 (CGKITDKGIENLVYGKTLNSDEPIPTVINTIRKINLQC), 177 to 220 (CMRI…KIDG), 251 to 284 (LDKLTKLILPNVPEHIEYIDFNKMPNLVKADLSG), 285 to 317 (CINLLDEQLKGLSKVRKLNLKECYDITDVGLSY), 329 to 361 (CFRITDSGLKYLSNADYVNICGCLKITNEGFFY), 369 to 395 (VVGYTTLSLYDCMIDGCGDYEYLTISD), 420 to 444 (CNNIIDVDLKSFTNLPTLSKIDLRY), 445 to 477 (CNNITNQGLSALCNIPIVKISNNYQISSKGISY), and 481 to 508 (SKKISIESCPKINSFPNLTGLKKLVFKT).

In Acanthamoeba polyphaga mimivirus (APMV), this protein is Putative F-box/LRR-repeat protein R542.